Reading from the N-terminus, the 86-residue chain is Large ribosomal subunit protein uL23 (86 aa).

The protein belongs to the universal ribosomal protein uL23 family. In terms of assembly, part of the 50S ribosomal subunit. Contacts protein L29.

Binds to 23S rRNA. One of the proteins that surrounds the polypeptide exit tunnel on the outside of the ribosome. This chain is Large ribosomal subunit protein uL23, found in Methanococcus maripaludis (strain DSM 14266 / JCM 13030 / NBRC 101832 / S2 / LL).